Reading from the N-terminus, the 229-residue chain is Large ribosomal subunit protein uL1 (229 aa).

Belongs to the universal ribosomal protein uL1 family. Part of the 50S ribosomal subunit.

Functionally, binds directly to 23S rRNA. The L1 stalk is quite mobile in the ribosome, and is involved in E site tRNA release. Protein L1 is also a translational repressor protein, it controls the translation of the L11 operon by binding to its mRNA. The sequence is that of Large ribosomal subunit protein uL1 from Ureaplasma urealyticum serovar 10 (strain ATCC 33699 / Western).